We begin with the raw amino-acid sequence, 102 residues long: NADH-quinone oxidoreductase subunit K 1 (102 aa).

The next 3 helical transmembrane spans lie at 5–25, 31–51, and 65–85; these read LSHYLTVSAILFTLGVFGIFL, IVILMSVELILLSVNINMVAF, and LFILTVAAAEAAIGLAILVVF.

This sequence belongs to the complex I subunit 4L family. NDH-1 is composed of 14 different subunits. Subunits NuoA, H, J, K, L, M, N constitute the membrane sector of the complex.

It is found in the cell inner membrane. The catalysed reaction is a quinone + NADH + 5 H(+)(in) = a quinol + NAD(+) + 4 H(+)(out). In terms of biological role, NDH-1 shuttles electrons from NADH, via FMN and iron-sulfur (Fe-S) centers, to quinones in the respiratory chain. The immediate electron acceptor for the enzyme in this species is believed to be ubiquinone. Couples the redox reaction to proton translocation (for every two electrons transferred, four hydrogen ions are translocated across the cytoplasmic membrane), and thus conserves the redox energy in a proton gradient. In Rhizobium etli (strain CIAT 652), this protein is NADH-quinone oxidoreductase subunit K 1.